A 339-amino-acid polypeptide reads, in one-letter code: MRVYYDRDADVNLIKSKKVAIIGYGSQGHAHANNLKDSGVTDMVIGLRPGSSAVAKAEAAGFKVMGPSEAAAWADVVMVLTPDEGQGALYKEHLEANLKQGAALAFAHGLSIHFRIIEARPDLDVFLIAPKGPGHTVRSEYQRGGGVPSLVAVAQNASGNALEIALSYASANGGGRAGIIETSFKEEVETDLFGEQAVLCGGLVELIRAGFETLVEAGYAPEMAYFECLHETKLIVDLIYEGGIANMNYSISNTAEYGEYATGPRIVTPETKAEMKRVLTDIQDGTFVRNFILENQSGNVGFKAIRARNNAHQIEQVGEKLRGMMPWIGKNKLVDKTRN.

The KARI N-terminal Rossmann domain maps to 1-182 (MRVYYDRDAD…GGGRAGIIET (182 aa)). NADP(+) contacts are provided by residues 24 to 27 (YGSQ), Arg-48, Ser-51, and 83 to 86 (DEGQ). The active site involves His-108. Gly-134 lines the NADP(+) pocket. Positions 183-328 (SFKEEVETDL…EKLRGMMPWI (146 aa)) constitute a KARI C-terminal knotted domain. Mg(2+) is bound by residues Asp-191, Glu-195, Glu-227, and Glu-231. Residue Ser-252 participates in substrate binding.

It belongs to the ketol-acid reductoisomerase family. It depends on Mg(2+) as a cofactor.

The enzyme catalyses (2R)-2,3-dihydroxy-3-methylbutanoate + NADP(+) = (2S)-2-acetolactate + NADPH + H(+). It carries out the reaction (2R,3R)-2,3-dihydroxy-3-methylpentanoate + NADP(+) = (S)-2-ethyl-2-hydroxy-3-oxobutanoate + NADPH + H(+). Its pathway is amino-acid biosynthesis; L-isoleucine biosynthesis; L-isoleucine from 2-oxobutanoate: step 2/4. The protein operates within amino-acid biosynthesis; L-valine biosynthesis; L-valine from pyruvate: step 2/4. Its function is as follows. Involved in the biosynthesis of branched-chain amino acids (BCAA). Catalyzes an alkyl-migration followed by a ketol-acid reduction of (S)-2-acetolactate (S2AL) to yield (R)-2,3-dihydroxy-isovalerate. In the isomerase reaction, S2AL is rearranged via a Mg-dependent methyl migration to produce 3-hydroxy-3-methyl-2-ketobutyrate (HMKB). In the reductase reaction, this 2-ketoacid undergoes a metal-dependent reduction by NADPH to yield (R)-2,3-dihydroxy-isovalerate. In Gluconacetobacter diazotrophicus (strain ATCC 49037 / DSM 5601 / CCUG 37298 / CIP 103539 / LMG 7603 / PAl5), this protein is Ketol-acid reductoisomerase (NADP(+)).